A 1514-amino-acid chain; its full sequence is MKDKQKRKKERTWAEAARLVLENYSDAPMTPKQILQVIEAEGLKEMRSGTSPLACLNAMLHSNSRGGEGLFYKLPGRISLFTLKKDAVQWSRNAATVDGDEPEDSADVESCGSNEASTVSGENDVSLDETSSNASCSTESQSRPLSNPRDSHRASSQANKQKKRTGVMLPRVVLTPLKVNGAHVEPASGFSGRHADGESGSPSSSSSGSLALGNSAIRGQAEVTRDPAPLLRGFRKPATGQMKRNRGEEVDFETPGSILVNTNLRALINSRTFHALPLHFQQQLLLLLPEVDRQVGTDGLLRLSGSALNNEFFTHAAQSWRERLADGEFTHEMQVRLRQEMEKEKKVEQWKEKFFEDYYGQKLGLTKEESLQQKEVQEEAKVKSGLCVSGESVRPQRGPNTRQRDGHFKKRSRPDLRTRSRRNIYKKQEPEQAGVAKDASAAPDVSLSKDTKTDLAGVNSTPGPDVSSATSGQEGPKCPSEPVASQIQAERDNLACASASPDRIPTLPQDTVDQETKDQKRKSFEQEASASFPEKKPRLEDRQSFRNTIESVHTEKPQPTKEEPKVPPIRIQLSRIKPPWVAKGRPTYQICPRIVPITESSCRGWTGARTLADIKARALQARGARGYHCNRETATTAIGGGGGPGGGGSGAIDEGGGRDSSSGDGSEACGHPEPRGAPSTSGESASDLQRTQLLPPCPLNGEHTPAEAAMPRARREDSASLRKEESCLLKRVPGVLTSGLEDASQPPIAPTGDQPCQALPPLSSQTPVAEMLTEQPKLLLDDRTECESSREDQGPTIPSESSSGRFPLGDLLGGGSDQAFDNMKEPVSMTPTFISELSLANYLQDRPDDDGLGLGATGLLIRESSRQEALTEAFASGSPTSWVPILSNYEVIKTSDPESRENIPCPEPQDEKEWERAVPLIAATESVPQPESCISHWTPPPAAVGSTGSDSEQVDLERLEMNGISEAPSPHSESTDTASDSEGHLSEDSSEVDASEVTVVKGSLGGDEKQDWDPSASLSKVNNDLSVLTRTGGVAASQSWVSRVCSVPHKIPDSLLLSSTECQPRSVCPLRPGSSVEVTNPLVMHLLHGNLPLEKVLPPGHRSSRLESSQLPLREQSQDRGTLQGTGENNRLAARINPGSAQTLKESILAQSYGASAGLVRAMASKAPAMSQKIAKMVTSLDSQHPETELTPSSGNLEEIDSKEHLSSFLCEEQKEGHSLSQGSDPGAAPGQCLGDHTTSKVPCFSSTNVSLSFGSEQTDGTLSDQNNAGGHEKKLFGPGNTVTTLQCPRSEEQTPLPAEVPPVFPSRKIEPSKNSVSGGVQTTRENRMPKPPPVSADSIKTEQTFLRDPIKADAENRKAAGYSSLELVGHLQGMPFVVDLPFWKLPREPGKGFSQPLEPSSIPSQLNIKQALYGKLSKLQLSPTSFNYSSSSATFPKGLAGGVVQLSHKASFGTGHTASLSLQMFADSSAVESISLQCACSLKAMIMCQGCGAFCHDDCIGPSKLCVLCLVVR.

The HTH HARE-type domain occupies 11-86 (RTWAEAARLV…RISLFTLKKD (76 aa)). Disordered stretches follow at residues 95–170 (ATVD…VMLP) and 183–249 (HVEP…RGEE). Positions 98-107 (DGDEPEDSAD) are enriched in acidic residues. Residues 111-145 (CGSNEASTVSGENDVSLDETSSNASCSTESQSRPL) are compositionally biased toward polar residues. A compositionally biased stretch (low complexity) spans 199 to 209 (SGSPSSSSSGS). Positions 243–246 (KRNR) are interaction with nucleosomal DNA forming a DNA clamp with BAP1. The 110-residue stretch at 255-364 (PGSILVNTNL…FEDYYGQKLG (110 aa)) folds into the DEUBAD domain. An LXXLL motif 1 motif is present at residues 284–288 (LLLLL). The segment at 300–655 (LLRLSGSALN…GGGSGAIDEG (356 aa)) is interaction with NCOA1. The short motif at 310-315 (NEFFTH) is the NEF motif element. Positions 336 to 346 (RLRQEMEKEKK) are interaction with nucleosomal DNA. Disordered regions lie at residues 378–543 (EEAK…EDRQ), 635–823 (TTAI…FDNM), 895–914 (SDPESRENIPCPEPQDEKEW), 926–952 (SVPQPESCISHWTPPPAAVGSTGSDSE), and 964–995 (ISEAPSPHSESTDTASDSEGHLSEDSSEVDAS). The Nuclear localization signal signature appears at 408 to 415 (FKKRSRPD). Residues 458-473 (VNSTPGPDVSSATSGQ) are compositionally biased toward polar residues. 2 positions are modified to phosphoserine: Ser-498 and Ser-500. Basic and acidic residues-rich tracts occupy residues 514–525 (QETKDQKRKSFE) and 533–543 (PEKKPRLEDRQ). Over residues 638–654 (IGGGGGPGGGGSGAIDE) the composition is skewed to gly residues. Polar residues predominate over residues 678 to 692 (PSTSGESASDLQRTQ). Basic and acidic residues-rich tracts occupy residues 713–728 (ARREDSASLRKEESCL) and 779–793 (LLDDRTECESSREDQ). The short motif at 808–812 (LGDLL) is the LXXLL motif 2 element. A compositionally biased stretch (polar residues) spans 971–980 (HSESTDTASD). The segment at 1082–1087 (LVMHLL) is required for interaction with RARA. 3 disordered regions span residues 1095–1131 (KVLPPGHRSSRLESSQLPLREQSQDRGTLQGTGENNR), 1213–1234 (EQKEGHSLSQGSDPGAAPGQCL), and 1256–1338 (SEQT…VSAD). Residues 1119 to 1129 (DRGTLQGTGEN) show a composition bias toward polar residues. 2 stretches are compositionally biased toward polar residues: residues 1256 to 1269 (SEQTDGTLSDQNNA) and 1313 to 1324 (SKNSVSGGVQTT). The PHD-type; atypical zinc finger occupies 1476 to 1513 (SLQCACSLKAMIMCQGCGAFCHDDCIGPSKLCVLCLVV).

This sequence belongs to the Asx family. In terms of assembly, core component of the polycomb repressive deubiquitinase (PR-DUB) complex, at least composed of BAP1, one of ASXL1, ASXL2 or (probably) ASXL3, and one of MBD5 or MBD6. Distinct combinations of ASXL and MBD proteins may preferentially bind specific histone modification marks. The PR-DUB core associates with a number of accessory proteins, including FOXK1, FOXK2, KDM1B, HCFC1 and OGT; KDM1B specifically associates with ASXL2 PR-DUB complexes. Interacts (via DEUBAD domain) with BAP1 (via ULD domain); the interaction is direct and forms a ubiquitin binding cleft. The interaction with BAP1 is important for maintaining BAP1 stability. Together with BAP1, associates (via DEUBAD domain) with nucleosomes; interacts with nucleosomal DNA and stabilizes the orientation of the nucleosome to line up the PR-DUB complex active site with its H2AK118ub1 substrate. Interacts (via PHD domain) with MBD5 and MBD6 (via MBD domain); the interaction is probably direct and mediates association of MBD proteins with the PR-DUB core. Interacts with RARA, RXRA. Interacts with NCOA1. Interacts with PPARA and PPARG. Post-translationally, ubiquitinated by TRIP12, leading to its subsequent degradation following binding of N(6)-methyladenine methylated DNA (6mA).

Its subcellular location is the nucleus. Functionally, probable Polycomb group (PcG) protein involved in transcriptional regulation mediated by ligand-bound nuclear hormone receptors, such as retinoic acid receptors (RARs) and peroxisome proliferator-activated receptor gamma (PPARG). Acts as a coactivator of RARA and RXRA through association with NCOA1. Acts as a corepressor for PPARG and suppresses its adipocyte differentiation-inducing activity. Non-catalytic component of the PR-DUB complex, a complex that specifically mediates deubiquitination of histone H2A monoubiquitinated at 'Lys-119' (H2AK119ub1). Acts as a sensor of N(6)-methyladenine methylation on DNA (6mA): recognizes and binds 6mA DNA, leading to its ubiquitination and degradation by TRIP12, thereby inactivating the PR-DUB complex and regulating Polycomb silencing. The PR-DUB complex is an epigenetic regulator of gene expression and acts as a transcriptional coactivator, affecting genes involved in development, cell communication, signaling, cell proliferation and cell viability. ASXL1, ASXL2 and ASXL3 function redundantly in the PR-DUB complex. The ASXL proteins are essential for chromatin recruitment and transcriptional activation of associated genes. ASXL1 and ASXL2 are important for BAP1 protein stability. Together with BAP1, negatively regulates epithelial-mesenchymal transition (EMT) of trophoblast stem cells during placental development by regulating genes involved in epithelial cell integrity, cell adhesion and cytoskeletal organization. The sequence is that of Polycomb group protein ASXL1 (Asxl1) from Mus musculus (Mouse).